A 517-amino-acid chain; its full sequence is Protein disulfide isomerase-like 1-2 (517 aa).

A signal peptide spans 1-23 (MAVNLVLSFALAILISSSPTAVG). The region spanning 24–143 (VDATEELKEA…IVEYLKRQVG (120 aa)) is the Thioredoxin 1 domain. N-linked (GlcNAc...) asparagine glycosylation occurs at N41. Residues C61 and C64 each act as nucleophile in the active site. C61 and C64 are disulfide-bonded. N301 is a glycosylation site (N-linked (GlcNAc...) asparagine). Residues 357–484 (VEYGNLTPYV…IISFINENRG (128 aa)) form the Thioredoxin 2 domain. Residues C407 and C410 each act as nucleophile in the active site. The cysteines at positions 407 and 410 are disulfide-linked. A Prevents secretion from ER motif is present at residues 514 to 517 (KDEL).

It belongs to the protein disulfide isomerase family.

The protein resides in the endoplasmic reticulum lumen. It carries out the reaction Catalyzes the rearrangement of -S-S- bonds in proteins.. Functionally, acts as a protein-folding catalyst that interacts with nascent polypeptides to catalyze the formation, isomerization, and reduction or oxidation of disulfide bonds. May play a role in storage protein biogenesis. This Oryza sativa subsp. japonica (Rice) protein is Protein disulfide isomerase-like 1-2 (PDIL1-2).